Consider the following 210-residue polypeptide: Pyridoxine/pyridoxamine 5'-phosphate oxidase (210 aa).

Substrate is bound by residues 7-10 (REDY) and K65. Residues 60 to 65 (RVVLLK), 75 to 76 (FT), R81, K82, and Q104 each bind FMN. Y122, R126, and S130 together coordinate substrate. Residues 139-140 (QS) and W183 each bind FMN. 189-191 (RLH) lines the substrate pocket. R193 contributes to the FMN binding site.

Belongs to the pyridoxamine 5'-phosphate oxidase family. Homodimer. Requires FMN as cofactor.

It catalyses the reaction pyridoxamine 5'-phosphate + O2 + H2O = pyridoxal 5'-phosphate + H2O2 + NH4(+). It carries out the reaction pyridoxine 5'-phosphate + O2 = pyridoxal 5'-phosphate + H2O2. It participates in cofactor metabolism; pyridoxal 5'-phosphate salvage; pyridoxal 5'-phosphate from pyridoxamine 5'-phosphate: step 1/1. It functions in the pathway cofactor metabolism; pyridoxal 5'-phosphate salvage; pyridoxal 5'-phosphate from pyridoxine 5'-phosphate: step 1/1. Catalyzes the oxidation of either pyridoxine 5'-phosphate (PNP) or pyridoxamine 5'-phosphate (PMP) into pyridoxal 5'-phosphate (PLP). This is Pyridoxine/pyridoxamine 5'-phosphate oxidase from Actinobacillus succinogenes (strain ATCC 55618 / DSM 22257 / CCUG 43843 / 130Z).